The primary structure comprises 181 residues: Small ribosomal subunit protein cS23 (181 aa).

The tract at residues 1 to 40 is disordered; that stretch reads MLPMSVHPATTPALASRPRVSLPRPSTPSSSSSLVHLKSR. Residues 14–36 are compositionally biased toward low complexity; it reads LASRPRVSLPRPSTPSSSSSLVH.

Belongs to the chloroplast-specific ribosomal protein cS23 family. Part of the 30S ribosomal subunit.

The protein localises to the plastid. It is found in the chloroplast. Its function is as follows. Component of the chloroplast ribosome (chloro-ribosome), a dedicated translation machinery responsible for the synthesis of chloroplast genome-encoded proteins, including proteins of the transcription and translation machinery and components of the photosynthetic apparatus. In Hordeum vulgare (Barley), this protein is Small ribosomal subunit protein cS23 (PSRP3).